A 125-amino-acid polypeptide reads, in one-letter code: MTGLDEALTRIRFTDTGLVPAIVQQWYTRDVLMMGWMDAEAFRRTMTEGRVTFWSRSRQEYWRKGDSSGNIQFVRGVALDCDGDTLLVTVDQVGAACHTGTYTCFDADPLAPVLGERPESAADGW.

Position 80 (Asp80) interacts with Mg(2+). Cys81 contributes to the Zn(2+) binding site. Residues Asp82 and Asp84 each coordinate Mg(2+). Positions 97 and 104 each coordinate Zn(2+).

The protein belongs to the PRA-CH family. As to quaternary structure, homodimer. Mg(2+) is required as a cofactor. The cofactor is Zn(2+).

Its subcellular location is the cytoplasm. The enzyme catalyses 1-(5-phospho-beta-D-ribosyl)-5'-AMP + H2O = 1-(5-phospho-beta-D-ribosyl)-5-[(5-phospho-beta-D-ribosylamino)methylideneamino]imidazole-4-carboxamide. Its pathway is amino-acid biosynthesis; L-histidine biosynthesis; L-histidine from 5-phospho-alpha-D-ribose 1-diphosphate: step 3/9. Catalyzes the hydrolysis of the adenine ring of phosphoribosyl-AMP. The polypeptide is Phosphoribosyl-AMP cyclohydrolase (Leifsonia xyli subsp. xyli (strain CTCB07)).